Reading from the N-terminus, the 300-residue chain is Metal tolerance protein 12 (300 aa).

Residues 1–26 (MESPESFSTMFMKPIRHILSEKKSRK) are Cytoplasmic-facing. A helical transmembrane segment spans residues 27-47 (IALFLLINTAYMVVEFVAGFM). Topologically, residues 48 to 50 (SNS) are vacuolar. The helical transmembrane segment at 51 to 71 (LGLISDACHMLFDCAALAIGL) threads the bilayer. Residues 72 to 91 (YASYISRLPANHQYNYGRGR) lie on the Cytoplasmic side of the membrane. A helical membrane pass occupies residues 92–112 (FEVLSGYVNAVFLVLVGALIV). The Vacuolar portion of the chain corresponds to 113–128 (LESIERILDPQEISTN). The helical transmembrane segment at 129–149 (SLLVVSVGGLLVNIVGLIFFH) threads the bilayer. Topologically, residues 150–160 (EEHHHAHGGSG) are cytoplasmic. The chain crosses the membrane as a helical span at residues 161–181 (IFLHVLADTMGSVGVVISTLL). Over 182 to 186 (IKYKG) the chain is Vacuolar. The chain crosses the membrane as a helical span at residues 187–207 (WLVADPASSIFISILIIASVI). The Cytoplasmic segment spans residues 208-300 (PLLRNSAEIL…WTLQVESVNS (93 aa)).

The protein belongs to the cation diffusion facilitator (CDF) transporter (TC 2.A.4) family. SLC30A subfamily.

It localises to the vacuole membrane. Its function is as follows. Involved in sequestration of excess metal in the cytoplasm into vacuoles to maintain metal homeostasis. This Arabidopsis thaliana (Mouse-ear cress) protein is Metal tolerance protein 12 (MTP12).